A 647-amino-acid chain; its full sequence is Beta-glucosidase-like SFR2, chloroplastic (647 aa).

Positions 116-140 are disordered; that stretch reads SAAGDGGSQQSWRSTGGENIGDREQ. Residues 123-132 are compositionally biased toward polar residues; that stretch reads SQQSWRSTGG. An N-linked (GlcNAc...) asparagine glycan is attached at asparagine 169. Residues histidine 258, 302–303, tyrosine 414, glutamate 466, tryptophan 504, 511–512, and phenylalanine 520 each bind a beta-D-glucoside; these read NE and EW. Catalysis depends on glutamate 303, which acts as the Proton donor. Catalysis depends on glutamate 466, which acts as the Nucleophile.

Belongs to the glycosyl hydrolase 1 family.

Its subcellular location is the plastid. The protein localises to the chloroplast outer membrane. It catalyses the reaction 2 a 1,2-diacyl-3-O-(beta-D-galactosyl)-sn-glycerol = a 1,2-diacyl-3-O-[beta-D-galactosyl-(1-&gt;6)-beta-D-galactosyl]-sn-glycerol + a 1,2-diacyl-sn-glycerol. Functionally, galactosyltransferase synthesizing digalactosyldiacylglycerol from monogalactosyldiacylglycerol in the absence of UDP-galactose. Potentially involved in freezing tolerance. This is Beta-glucosidase-like SFR2, chloroplastic from Oryza sativa subsp. japonica (Rice).